Consider the following 1538-residue polypeptide: Lysophospholipase nte1 (1538 aa).

Residues 1 to 74 (MATDGGPLAA…PPPTPSTMAG (74 aa)) are Cytoplasmic-facing. The helical transmembrane segment at 75 to 95 (WFGWVFSFFFQVIPSVLYWVI) threads the bilayer. The Lumenal portion of the chain corresponds to 96-117 (TFATITLPTWLFTLFSMSLTFT). A helical transmembrane segment spans residues 118–138 (MNFTTLLLIALAIVSTISWFI). The Cytoplasmic portion of the chain corresponds to 139–1538 (RYRFLNMYSR…RTLAPRRASI (1400 aa)). Disordered regions lie at residues 242-264 (KPNV…DHRV), 302-393 (EGSS…KSVH), and 529-559 (AAQS…GDLL). The segment covering 302–314 (EGSSSSASSVGPS) has biased composition (low complexity). The span at 329–345 (GLEDSPRSNFVRDHGDS) shows a compositional bias: basic and acidic residues. A nucleoside 3',5'-cyclic phosphate contacts are provided by residues 692-811 (GGTS…QGYV) and 856-976 (RLTS…IAQR). The PNPLA domain occupies 1235 to 1399 (LVLGGGGARG…IDNLTVTHMK (165 aa)). The short motif at 1239–1244 (GGGARG) is the GXGXXG element. The short motif at 1266-1270 (GTSIG) is the GXSXG element. Catalysis depends on Ser1268, which acts as the Nucleophile. Catalysis depends on Asp1386, which acts as the Proton acceptor. The short motif at 1386–1388 (DGG) is the DGA/G element. Residues 1517-1538 (LPEETEEKKKLQRTLAPRRASI) form a disordered region.

The protein belongs to the NTE family.

The protein localises to the endoplasmic reticulum membrane. It carries out the reaction a 1-acyl-sn-glycero-3-phosphocholine + H2O = sn-glycerol 3-phosphocholine + a fatty acid + H(+). Inhibited by organophosphorus esters. In terms of biological role, intracellular phospholipase B that catalyzes the double deacylation of phosphatidylcholine (PC) to glycerophosphocholine (GroPCho). Plays an important role in membrane lipid homeostasis. Responsible for the rapid PC turnover in response to inositol, elevated temperatures, or when choline is present in the growth medium. The sequence is that of Lysophospholipase nte1 (nte1) from Aspergillus oryzae (strain ATCC 42149 / RIB 40) (Yellow koji mold).